Here is a 369-residue protein sequence, read N- to C-terminus: Anhydro-N-acetylmuramic acid kinase (369 aa).

Residue 12-19 (GTSMDGVD) coordinates ATP.

This sequence belongs to the anhydro-N-acetylmuramic acid kinase family.

The enzyme catalyses 1,6-anhydro-N-acetyl-beta-muramate + ATP + H2O = N-acetyl-D-muramate 6-phosphate + ADP + H(+). Its pathway is amino-sugar metabolism; 1,6-anhydro-N-acetylmuramate degradation. It participates in cell wall biogenesis; peptidoglycan recycling. In terms of biological role, catalyzes the specific phosphorylation of 1,6-anhydro-N-acetylmuramic acid (anhMurNAc) with the simultaneous cleavage of the 1,6-anhydro ring, generating MurNAc-6-P. Is required for the utilization of anhMurNAc either imported from the medium or derived from its own cell wall murein, and thus plays a role in cell wall recycling. In Shewanella sp. (strain MR-7), this protein is Anhydro-N-acetylmuramic acid kinase.